The primary structure comprises 155 residues: MRHANKRGAARLAAVQALYQMDVAGSGVFEITAEYEAFRLGKEVDGALYREADAQWFRAILTGVVEDQKTIDPVIRQALTDDWPLSRLDSTLRAILRAGVYELMKREDVPVAVIVSEYVDIAKAFYEEDEPKLVNAVLDRVSRRVRGEGRGKDAS.

This sequence belongs to the NusB family.

In terms of biological role, involved in transcription antitermination. Required for transcription of ribosomal RNA (rRNA) genes. Binds specifically to the boxA antiterminator sequence of the ribosomal RNA (rrn) operons. This Mesorhizobium japonicum (strain LMG 29417 / CECT 9101 / MAFF 303099) (Mesorhizobium loti (strain MAFF 303099)) protein is Transcription antitermination protein NusB.